Here is a 303-residue protein sequence, read N- to C-terminus: UDP-N-acetylenolpyruvoylglucosamine reductase (303 aa).

Residues 28–195 enclose the FAD-binding PCMH-type domain; it reads KTGGPAQYLA…ISATFGLEPG (168 aa). The active site involves R174. The active-site Proton donor is S224. Residue E294 is part of the active site.

Belongs to the MurB family. The cofactor is FAD.

Its subcellular location is the cytoplasm. The enzyme catalyses UDP-N-acetyl-alpha-D-muramate + NADP(+) = UDP-N-acetyl-3-O-(1-carboxyvinyl)-alpha-D-glucosamine + NADPH + H(+). It functions in the pathway cell wall biogenesis; peptidoglycan biosynthesis. Cell wall formation. The sequence is that of UDP-N-acetylenolpyruvoylglucosamine reductase from Lactobacillus gasseri (strain ATCC 33323 / DSM 20243 / BCRC 14619 / CIP 102991 / JCM 1131 / KCTC 3163 / NCIMB 11718 / NCTC 13722 / AM63).